A 537-amino-acid chain; its full sequence is Hydroxylamine reductase (537 aa).

Positions 3, 6, 15, and 21 each coordinate [4Fe-4S] cluster. Positions 239, 263, 307, 393, 421, 446, 480, and 482 each coordinate hybrid [4Fe-2O-2S] cluster. Position 393 is a cysteine persulfide (C393).

The protein belongs to the HCP family. The cofactor is [4Fe-4S] cluster. Requires hybrid [4Fe-2O-2S] cluster as cofactor.

It is found in the cytoplasm. The enzyme catalyses A + NH4(+) + H2O = hydroxylamine + AH2 + H(+). Functionally, catalyzes the reduction of hydroxylamine to form NH(3) and H(2)O. The sequence is that of Hydroxylamine reductase from Lawsonia intracellularis (strain PHE/MN1-00).